The chain runs to 421 residues: Serine--tRNA ligase (421 aa).

L-serine is bound at residue 227-229; that stretch reads TSE. ATP contacts are provided by residues 257 to 259 and valine 273; that span reads RRE. Position 280 (glutamate 280) interacts with L-serine. Residue 344-347 coordinates ATP; sequence ELTS. Threonine 379 contacts L-serine.

It belongs to the class-II aminoacyl-tRNA synthetase family. Type-1 seryl-tRNA synthetase subfamily. In terms of assembly, homodimer. The tRNA molecule binds across the dimer.

The protein localises to the cytoplasm. It carries out the reaction tRNA(Ser) + L-serine + ATP = L-seryl-tRNA(Ser) + AMP + diphosphate + H(+). The catalysed reaction is tRNA(Sec) + L-serine + ATP = L-seryl-tRNA(Sec) + AMP + diphosphate + H(+). Its pathway is aminoacyl-tRNA biosynthesis; selenocysteinyl-tRNA(Sec) biosynthesis; L-seryl-tRNA(Sec) from L-serine and tRNA(Sec): step 1/1. Its function is as follows. Catalyzes the attachment of serine to tRNA(Ser). Is also able to aminoacylate tRNA(Sec) with serine, to form the misacylated tRNA L-seryl-tRNA(Sec), which will be further converted into selenocysteinyl-tRNA(Sec). This Leifsonia xyli subsp. xyli (strain CTCB07) protein is Serine--tRNA ligase.